We begin with the raw amino-acid sequence, 85 residues long: MERKRYSKRYCKYTEAKISFIDYKDLDMLKHTLSERYKIMPRRLTGNSKKWQERVEVAIKRARHMALIPYIVDRKRVVDSPFKQH.

This sequence belongs to the bacterial ribosomal protein bS18 family. Part of the 30S ribosomal subunit. Forms a tight heterodimer with protein bS6.

In terms of biological role, binds as a heterodimer with protein bS6 to the central domain of the 16S rRNA, where it helps stabilize the platform of the 30S subunit. This chain is Small ribosomal subunit protein bS18, found in Helicobacter pylori (strain Shi470).